A 299-amino-acid polypeptide reads, in one-letter code: 5,10-dihydrophenazine-1-carboxylate 9-dimethylallyltransferase (299 aa).

This sequence belongs to the aromatic prenyltransferase family.

The catalysed reaction is 5,10-dihydrophenazine 1-carboxylate + dimethylallyl diphosphate = 5,10-dihydro-9-dimethylallylphenazine 1-carboxylate + diphosphate. The protein operates within antibiotic biosynthesis; phenazine biosynthesis. Its activity is regulated as follows. Does not require magnesium or any other divalent metal ions for activity. In terms of biological role, involved in the biosynthesis of prenylated phenazines. Catalyzes the transfer of a dimethylallyl moiety to C-9 of 5,10-dihydrophenazine 1-carboxylate (dihydro-PCA). Specific for both dimethylallyl diphosphate and dihydro-PCA. This is 5,10-dihydrophenazine-1-carboxylate 9-dimethylallyltransferase from Streptomyces anulatus (Streptomyces chrysomallus).